Reading from the N-terminus, the 302-residue chain is tRNA pseudouridine synthase B (302 aa).

Residue Asp-47 is the Nucleophile of the active site.

Belongs to the pseudouridine synthase TruB family. Type 1 subfamily.

It carries out the reaction uridine(55) in tRNA = pseudouridine(55) in tRNA. Its function is as follows. Responsible for synthesis of pseudouridine from uracil-55 in the psi GC loop of transfer RNAs. This Ruegeria sp. (strain TM1040) (Silicibacter sp.) protein is tRNA pseudouridine synthase B.